Reading from the N-terminus, the 516-residue chain is uncharacterized protein (516 aa).

Helical transmembrane passes span 183–203 (SAAD…GDGV), 261–281 (VLKT…TYII), 308–328 (VMNG…TALL), 329–349 (LDHQ…AYSF), 356–376 (LLDV…GQVL), 379–399 (LAFS…LALA), 430–450 (LGHG…FLAL), 461–481 (PAWL…IWLL), and 492–512 (IVFA…ASAF).

The protein resides in the cell membrane. Possible permease/transporter. This is an uncharacterized protein from Sinorhizobium fredii (strain NBRC 101917 / NGR234).